A 258-amino-acid chain; its full sequence is Acetylglutamate kinase (258 aa).

Substrate-binding positions include 44-45 (GG), arginine 66, and asparagine 158. ATP-binding positions include 181 to 186 (DVSGIL) and 209 to 211 (IIT).

The protein belongs to the acetylglutamate kinase family. ArgB subfamily. In terms of assembly, homodimer.

It localises to the cytoplasm. It catalyses the reaction N-acetyl-L-glutamate + ATP = N-acetyl-L-glutamyl 5-phosphate + ADP. It functions in the pathway amino-acid biosynthesis; L-arginine biosynthesis; N(2)-acetyl-L-ornithine from L-glutamate: step 2/4. Its function is as follows. Catalyzes the ATP-dependent phosphorylation of N-acetyl-L-glutamate. The protein is Acetylglutamate kinase of Salmonella arizonae (strain ATCC BAA-731 / CDC346-86 / RSK2980).